Here is a 638-residue protein sequence, read N- to C-terminus: Threonine--tRNA ligase 2 (638 aa).

Residues 1–64 (MSKHVHIQLP…EEDAELSIVT (64 aa)) form the TGS domain. Positions 245–535 (DHRKLGKQLG…LIEHYGGAFP (291 aa)) are catalytic. Residues Cys-336, His-387, and His-512 each coordinate Zn(2+).

The protein belongs to the class-II aminoacyl-tRNA synthetase family. Homodimer. Zn(2+) serves as cofactor.

It is found in the cytoplasm. The catalysed reaction is tRNA(Thr) + L-threonine + ATP = L-threonyl-tRNA(Thr) + AMP + diphosphate + H(+). Functionally, catalyzes the attachment of threonine to tRNA(Thr) in a two-step reaction: L-threonine is first activated by ATP to form Thr-AMP and then transferred to the acceptor end of tRNA(Thr). Also edits incorrectly charged L-seryl-tRNA(Thr). The protein is Threonine--tRNA ligase 2 (thrZ) of Bacillus subtilis (strain 168).